The primary structure comprises 126 residues: Fluoride-specific ion channel FluC 2 (126 aa).

The next 4 helical transmembrane spans lie at 7–27, 37–57, 65–85, and 101–121; these read MWVG…GLSI, LGTF…SILF, YGDL…TTFS, and AIAA…AAFG. Gly79 and Thr82 together coordinate Na(+).

This sequence belongs to the fluoride channel Fluc/FEX (TC 1.A.43) family.

It localises to the cell inner membrane. It catalyses the reaction fluoride(in) = fluoride(out). Na(+) is not transported, but it plays an essential structural role and its presence is essential for fluoride channel function. In terms of biological role, fluoride-specific ion channel. Important for reducing fluoride concentration in the cell, thus reducing its toxicity. The chain is Fluoride-specific ion channel FluC 2 from Yersinia pseudotuberculosis serotype I (strain IP32953).